Consider the following 151-residue polypeptide: 6,7-dimethyl-8-ribityllumazine synthase (151 aa).

5-amino-6-(D-ribitylamino)uracil contacts are provided by residues F15, A49–E51, and A73–I75. A (2S)-2-hydroxy-3-oxobutyl phosphate-binding site is contributed by E78–T79. Residue H81 is the Proton donor of the active site. 5-amino-6-(D-ribitylamino)uracil is bound at residue F106. (2S)-2-hydroxy-3-oxobutyl phosphate is bound at residue R120.

This sequence belongs to the DMRL synthase family. Forms an icosahedral capsid composed of 60 subunits, arranged as a dodecamer of pentamers.

The enzyme catalyses (2S)-2-hydroxy-3-oxobutyl phosphate + 5-amino-6-(D-ribitylamino)uracil = 6,7-dimethyl-8-(1-D-ribityl)lumazine + phosphate + 2 H2O + H(+). Its pathway is cofactor biosynthesis; riboflavin biosynthesis; riboflavin from 2-hydroxy-3-oxobutyl phosphate and 5-amino-6-(D-ribitylamino)uracil: step 1/2. Its function is as follows. Catalyzes the formation of 6,7-dimethyl-8-ribityllumazine by condensation of 5-amino-6-(D-ribitylamino)uracil with 3,4-dihydroxy-2-butanone 4-phosphate. This is the penultimate step in the biosynthesis of riboflavin. The protein is 6,7-dimethyl-8-ribityllumazine synthase of Coxiella burnetii (strain CbuG_Q212) (Coxiella burnetii (strain Q212)).